Here is a 284-residue protein sequence, read N- to C-terminus: Urease accessory protein UreD (284 aa).

Belongs to the UreD family. As to quaternary structure, ureD, UreF and UreG form a complex that acts as a GTP-hydrolysis-dependent molecular chaperone, activating the urease apoprotein by helping to assemble the nickel containing metallocenter of UreC. The UreE protein probably delivers the nickel.

It is found in the cytoplasm. Its function is as follows. Required for maturation of urease via the functional incorporation of the urease nickel metallocenter. This is Urease accessory protein UreD from Bordetella bronchiseptica (strain ATCC BAA-588 / NCTC 13252 / RB50) (Alcaligenes bronchisepticus).